The primary structure comprises 362 residues: MKHIALIVLYFLSFSVQAERLKDIASVQGVRENQLFGYGLVIGLNGTGDSTAFTNQSFVSMLSRFGVTLPEGVNATSKNVAAVSLTATLPAFSKPGQKIDVTVSSIGNASALRGGTLLLSTLKGADGAVYAIAQGNLVVGGLGANGADGSRTTGNVPTVGRIPNGASVERIVPSSFNTGDTLTFNLNRPDFTTAKQVTDKINNLLGPGVATTLDATSIRVSAPRDSSQRVTYLSILENLDVEVAEERARIVVNSRTGTIIIGQHVKVSPAAITHGSLTVTIKEVPPVVGKDGTITGGQTIVSPREGIEIAPNSGHMFVFDPGASLDDIVRAVNQVGAAPGDVMAILEGLKQAGAINADLVVI.

A signal peptide spans 1 to 18; the sequence is MKHIALIVLYFLSFSVQA.

The protein belongs to the FlgI family. In terms of assembly, the basal body constitutes a major portion of the flagellar organelle and consists of four rings (L,P,S, and M) mounted on a central rod.

The protein resides in the periplasm. The protein localises to the bacterial flagellum basal body. In terms of biological role, assembles around the rod to form the L-ring and probably protects the motor/basal body from shearing forces during rotation. The chain is Flagellar P-ring protein from Marinomonas sp. (strain MWYL1).